The sequence spans 333 residues: tRNA N6-adenosine threonylcarbamoyltransferase (333 aa).

Fe cation contacts are provided by His108 and His112. Substrate is bound by residues Leu129–Gly133, Asp161, Glu178, and Ser258. Residue Asp286 coordinates Fe cation.

Belongs to the KAE1 / TsaD family. Fe(2+) is required as a cofactor.

Its subcellular location is the cytoplasm. The catalysed reaction is L-threonylcarbamoyladenylate + adenosine(37) in tRNA = N(6)-L-threonylcarbamoyladenosine(37) in tRNA + AMP + H(+). In terms of biological role, required for the formation of a threonylcarbamoyl group on adenosine at position 37 (t(6)A37) in tRNAs that read codons beginning with adenine. Is probably involved in the transfer of the threonylcarbamoyl moiety of threonylcarbamoyl-AMP (TC-AMP) to the N6 group of A37. In Pyrobaculum islandicum (strain DSM 4184 / JCM 9189 / GEO3), this protein is tRNA N6-adenosine threonylcarbamoyltransferase.